The sequence spans 327 residues: Serine/threonine-protein phosphatase PP1-1 (327 aa).

Aspartate 63, histidine 65, aspartate 91, and asparagine 123 together coordinate Mn(2+). Catalysis depends on histidine 124, which acts as the Proton donor. Mn(2+)-binding residues include histidine 172 and histidine 247. The tract at residues 305–327 (GYQGSSQNWHMTPPRKNKTGNSK) is disordered. Position 316 is a phosphothreonine; by CDC2 (threonine 316). The segment covering 317-327 (PPRKNKTGNSK) has biased composition (basic residues).

It belongs to the PPP phosphatase family. PP-1 subfamily. Oligomer. It depends on Mn(2+) as a cofactor.

Its subcellular location is the nucleus. It catalyses the reaction O-phospho-L-seryl-[protein] + H2O = L-seryl-[protein] + phosphate. The enzyme catalyses O-phospho-L-threonyl-[protein] + H2O = L-threonyl-[protein] + phosphate. Essential role in cell cycle control. PP1 is perhaps required for exit from mitosis. This chain is Serine/threonine-protein phosphatase PP1-1 (dis2), found in Schizosaccharomyces pombe (strain 972 / ATCC 24843) (Fission yeast).